The sequence spans 769 residues: Gephyrin (769 aa).

The segment at 14–153 (QIRVGVLTVS…LPGSKKGSQE (140 aa)) is MPT Mo-transferase. An interaction with GABARAP region spans residues 140–349 (LIINLPGSKK…VDITKVARRH (210 aa)). Disordered regions lie at residues 181–232 (DELE…DSSS) and 260–299 (TASL…SKGV). Positions 187–199 (PSPPPPLSPPPTT) are enriched in pro residues. Phosphoserine is present on residues serine 188 and serine 194. The residue at position 198 (threonine 198) is a Phosphothreonine. The residue at position 200 (serine 200) is a Phosphoserine. Cysteine 212 is lipidated: S-palmitoyl cysteine. Over residues 261 to 286 (ASLSTTPSESPRAQATSRLSTASCPT) the composition is skewed to polar residues. Serine 262 is subject to Phosphoserine. A phosphothreonine mark is found at threonine 265 and threonine 266. A phosphoserine mark is found at serine 268 and serine 270. The S-palmitoyl cysteine moiety is linked to residue cysteine 284. The segment at 327–769 (SSKENILRAS…VVDVMVIGRL (443 aa)) is MPT adenylyltransferase. A Phosphoserine modification is found at serine 338.

In the N-terminal section; belongs to the MoaB/Mog family. This sequence in the C-terminal section; belongs to the MoeA family. Homotrimer, homodimer and homooligomer. Interacts with SRGAP2 (via SH3 domain). Interacts with GLRB. Interacts with GABARAP. Interacts with GABRA3. GABRA3 and GLRB occupy overlapping binding sites. Interacts with ARHGAP32; IQSEC3, INSYN1 and INSYN2A. It depends on Mg(2+) as a cofactor. In terms of processing, palmitoylated. Palmitoylation is stimulated by GABA type A receptors activity. Palmitoylation by ZDHHC12 regulates clustering at synapses.

The protein resides in the postsynaptic cell membrane. The protein localises to the cell membrane. It is found in the cytoplasm. Its subcellular location is the cytosol. It localises to the cytoskeleton. The protein resides in the cell projection. The protein localises to the dendrite. It is found in the postsynaptic density. It carries out the reaction molybdopterin + ATP + H(+) = adenylyl-molybdopterin + diphosphate. The catalysed reaction is adenylyl-molybdopterin + molybdate = Mo-molybdopterin + AMP + H(+). The protein operates within cofactor biosynthesis; molybdopterin biosynthesis. Inhibited by copper and tungsten. Functionally, microtubule-associated protein involved in membrane protein-cytoskeleton interactions. It is thought to anchor the inhibitory glycine receptor (GLYR) to subsynaptic microtubules. Acts as a major instructive molecule at inhibitory synapses, where it also clusters GABA type A receptors. Its function is as follows. Also has a catalytic activity and catalyzes two steps in the biosynthesis of the molybdenum cofactor. In the first step, molybdopterin is adenylated. Subsequently, molybdate is inserted into adenylated molybdopterin and AMP is released. The protein is Gephyrin (Gphn) of Mus musculus (Mouse).